The following is a 409-amino-acid chain: Beta-glucanase (409 aa).

The first 31 residues, 1–31 (MRKNRGFSFSSKAVMMCCLAFLLIPASFAFA), serve as a signal peptide directing secretion. Glu-95 acts as the Proton donor in catalysis. Asp-156 (nucleophile) is an active-site residue.

It belongs to the glycosyl hydrolase 8 (cellulase D) family.

It catalyses the reaction Hydrolysis of (1-&gt;4)-beta-D-glucosidic linkages in beta-D-glucans containing (1-&gt;3)- and (1-&gt;4)-bonds.. In Niallia circulans (Bacillus circulans), this protein is Beta-glucanase (bgc).